The primary structure comprises 401 residues: Argininosuccinate synthase (401 aa).

9 to 17 is a binding site for ATP; sequence AYSGGLDTS. An L-citrulline-binding site is contributed by Tyr86. Gly116 provides a ligand contact to ATP. Positions 118, 122, and 123 each coordinate L-aspartate. Asn122 is an L-citrulline binding site. Arg126, Ser174, Ser183, Glu259, and Tyr271 together coordinate L-citrulline.

Belongs to the argininosuccinate synthase family. Type 1 subfamily. Homotetramer.

The protein localises to the cytoplasm. It carries out the reaction L-citrulline + L-aspartate + ATP = 2-(N(omega)-L-arginino)succinate + AMP + diphosphate + H(+). The protein operates within amino-acid biosynthesis; L-arginine biosynthesis; L-arginine from L-ornithine and carbamoyl phosphate: step 2/3. The polypeptide is Argininosuccinate synthase (Bacillus mycoides (strain KBAB4) (Bacillus weihenstephanensis)).